The following is a 265-amino-acid chain: (-)-isopiperitenol/(-)-carveol dehydrogenase, mitochondrial (265 aa).

The N-terminal 30 residues, 1 to 30, are a transit peptide targeting the mitochondrion; sequence MASVKKLAGKVAIVTGGASGIGEVTARLFA. 13 to 38 is an NAD(+) binding site; that stretch reads IVTGGASGIGEVTARLFAERGARAVV. Position 147 (Ser-147) interacts with substrate. The active-site Proton acceptor is Tyr-160.

It belongs to the short-chain dehydrogenases/reductases (SDR) family. As to quaternary structure, homodimer and homotetramer. In terms of tissue distribution, peltate glandular trichomes.

The protein resides in the mitochondrion. It carries out the reaction (1S,6R)-isopiperitenol + NAD(+) = (6R)-isopiperitenone + NADH + H(+). The enzyme catalyses (1S,5R)-carveol + NADP(+) = (R)-carvone + NADPH + H(+). Involved in the biosynthesis of menthol and related monoterpenes in leaves. Can use (-)-trans-carveol and, with a lower relative velocity, (-)-trans-isopiperitenol, (+)-neomenthol, (+)-neoisomenthol and (-)-cis-isopiperitenol as substrates, but not (-)-cis-carvenol, (-)-menthol, (+)-isomenthol, 7-hydroxy-limonene, (-)-isopiperitenone or (-)-carvone. The chain is (-)-isopiperitenol/(-)-carveol dehydrogenase, mitochondrial from Mentha piperita (Peppermint).